A 280-amino-acid chain; its full sequence is Phosphatidylglycerol--prolipoprotein diacylglyceryl transferase (280 aa).

The next 3 membrane-spanning stretches (helical) occupy residues 21 to 41, 54 to 74, and 88 to 108; these read WYGI…ISEG, LLLW…VIFE, and IWNG…VLLI. A 1,2-diacyl-sn-glycero-3-phospho-(1'-sn-glycerol) is bound at residue Arg-136. Transmembrane regions (helical) follow at residues 176-196, 206-226, and 236-256; these read QPTF…ILSL, GEVF…VEGM, and IIRV…ILWI.

The protein belongs to the Lgt family.

The protein localises to the cell membrane. The catalysed reaction is L-cysteinyl-[prolipoprotein] + a 1,2-diacyl-sn-glycero-3-phospho-(1'-sn-glycerol) = an S-1,2-diacyl-sn-glyceryl-L-cysteinyl-[prolipoprotein] + sn-glycerol 1-phosphate + H(+). The protein operates within protein modification; lipoprotein biosynthesis (diacylglyceryl transfer). In terms of biological role, catalyzes the transfer of the diacylglyceryl group from phosphatidylglycerol to the sulfhydryl group of the N-terminal cysteine of a prolipoprotein, the first step in the formation of mature lipoproteins. This chain is Phosphatidylglycerol--prolipoprotein diacylglyceryl transferase, found in Lactobacillus acidophilus (strain ATCC 700396 / NCK56 / N2 / NCFM).